Consider the following 257-residue polypeptide: Imidazole glycerol phosphate synthase subunit HisF (257 aa).

Residues Asp-11 and Asp-130 contribute to the active site.

It belongs to the HisA/HisF family. In terms of assembly, heterodimer of HisH and HisF.

The protein resides in the cytoplasm. It catalyses the reaction 5-[(5-phospho-1-deoxy-D-ribulos-1-ylimino)methylamino]-1-(5-phospho-beta-D-ribosyl)imidazole-4-carboxamide + L-glutamine = D-erythro-1-(imidazol-4-yl)glycerol 3-phosphate + 5-amino-1-(5-phospho-beta-D-ribosyl)imidazole-4-carboxamide + L-glutamate + H(+). Its pathway is amino-acid biosynthesis; L-histidine biosynthesis; L-histidine from 5-phospho-alpha-D-ribose 1-diphosphate: step 5/9. Functionally, IGPS catalyzes the conversion of PRFAR and glutamine to IGP, AICAR and glutamate. The HisF subunit catalyzes the cyclization activity that produces IGP and AICAR from PRFAR using the ammonia provided by the HisH subunit. The protein is Imidazole glycerol phosphate synthase subunit HisF of Aliivibrio salmonicida (strain LFI1238) (Vibrio salmonicida (strain LFI1238)).